The chain runs to 391 residues: uncharacterized protein (391 aa).

In terms of domain architecture, OBG-type G spans 85 to 314 (ATAAFVGFPS…LKEKIYEKLG (230 aa)). GTP is bound by residues 91–98 (GFPSVGKS), 137–141 (DAPGI), and 267–270 (NKID). Residues 314-389 (GFIKIYLKPQ…EDGDILTIVI (76 aa)) form the TGS domain.

It belongs to the TRAFAC class OBG-HflX-like GTPase superfamily. OBG GTPase family.

This is an uncharacterized protein from Methanocaldococcus jannaschii (strain ATCC 43067 / DSM 2661 / JAL-1 / JCM 10045 / NBRC 100440) (Methanococcus jannaschii).